Reading from the N-terminus, the 328-residue chain is 4-hydroxy-3-methylbut-2-enyl diphosphate reductase (328 aa).

C13 provides a ligand contact to [4Fe-4S] cluster. Residues H41 and H75 each coordinate (2E)-4-hydroxy-3-methylbut-2-enyl diphosphate. Residues H41 and H75 each coordinate dimethylallyl diphosphate. Isopentenyl diphosphate contacts are provided by H41 and H75. C97 is a [4Fe-4S] cluster binding site. A (2E)-4-hydroxy-3-methylbut-2-enyl diphosphate-binding site is contributed by H125. Position 125 (H125) interacts with dimethylallyl diphosphate. Residue H125 participates in isopentenyl diphosphate binding. E127 serves as the catalytic Proton donor. T168 serves as a coordination point for (2E)-4-hydroxy-3-methylbut-2-enyl diphosphate. C225 serves as a coordination point for [4Fe-4S] cluster. Residues S253, S254, N255, and S302 each coordinate (2E)-4-hydroxy-3-methylbut-2-enyl diphosphate. The dimethylallyl diphosphate site is built by S253, S254, N255, and S302. Residues S253, S254, N255, and S302 each contribute to the isopentenyl diphosphate site.

The protein belongs to the IspH family. [4Fe-4S] cluster serves as cofactor.

The enzyme catalyses isopentenyl diphosphate + 2 oxidized [2Fe-2S]-[ferredoxin] + H2O = (2E)-4-hydroxy-3-methylbut-2-enyl diphosphate + 2 reduced [2Fe-2S]-[ferredoxin] + 2 H(+). It carries out the reaction dimethylallyl diphosphate + 2 oxidized [2Fe-2S]-[ferredoxin] + H2O = (2E)-4-hydroxy-3-methylbut-2-enyl diphosphate + 2 reduced [2Fe-2S]-[ferredoxin] + 2 H(+). Its pathway is isoprenoid biosynthesis; dimethylallyl diphosphate biosynthesis; dimethylallyl diphosphate from (2E)-4-hydroxy-3-methylbutenyl diphosphate: step 1/1. The protein operates within isoprenoid biosynthesis; isopentenyl diphosphate biosynthesis via DXP pathway; isopentenyl diphosphate from 1-deoxy-D-xylulose 5-phosphate: step 6/6. Functionally, catalyzes the conversion of 1-hydroxy-2-methyl-2-(E)-butenyl 4-diphosphate (HMBPP) into a mixture of isopentenyl diphosphate (IPP) and dimethylallyl diphosphate (DMAPP). Acts in the terminal step of the DOXP/MEP pathway for isoprenoid precursor biosynthesis. The protein is 4-hydroxy-3-methylbut-2-enyl diphosphate reductase of Chlorobium chlorochromatii (strain CaD3).